The primary structure comprises 374 residues: CC-adding tRNA nucleotidyltransferase (374 aa).

39–42 lines the CTP pocket; it reads GAVR. Mg(2+) contacts are provided by D52 and D54. CTP-binding positions include 126 to 127, N131, 171 to 180, and R209; these read RD and DASRLVRAAR.

This sequence belongs to the tRNA nucleotidyltransferase/poly(A) polymerase family. Mg(2+) is required as a cofactor.

It catalyses the reaction a tRNA precursor + 2 CTP = a tRNA with a 3' CC end + 2 diphosphate. Functionally, tRNA nucleotidyltransferase involved in the synthesis of the tRNA CCA terminus. Adds the two cytidine residues to tRNA. In Deinococcus radiodurans (strain ATCC 13939 / DSM 20539 / JCM 16871 / CCUG 27074 / LMG 4051 / NBRC 15346 / NCIMB 9279 / VKM B-1422 / R1), this protein is CC-adding tRNA nucleotidyltransferase.